A 220-amino-acid chain; its full sequence is NADH-quinone oxidoreductase subunit I (220 aa).

4Fe-4S ferredoxin-type domains are found at residues L71–H102 and D112–R141. [4Fe-4S] cluster is bound by residues C82, C85, C88, C92, C121, C124, C127, and C131. The interval M187–V220 is disordered. Positions P198–T207 are enriched in basic and acidic residues.

It belongs to the complex I 23 kDa subunit family. NDH-1 is composed of 14 different subunits. Subunits NuoA, H, J, K, L, M, N constitute the membrane sector of the complex. It depends on [4Fe-4S] cluster as a cofactor.

Its subcellular location is the cell inner membrane. The enzyme catalyses a quinone + NADH + 5 H(+)(in) = a quinol + NAD(+) + 4 H(+)(out). Functionally, NDH-1 shuttles electrons from NADH, via FMN and iron-sulfur (Fe-S) centers, to quinones in the respiratory chain. The immediate electron acceptor for the enzyme in this species is believed to be ubiquinone. Couples the redox reaction to proton translocation (for every two electrons transferred, four hydrogen ions are translocated across the cytoplasmic membrane), and thus conserves the redox energy in a proton gradient. In Helicobacter pylori (strain Shi470), this protein is NADH-quinone oxidoreductase subunit I.